The primary structure comprises 347 residues: L-Ala-D/L-amino acid epimerase (347 aa).

Residue 156 to 158 (KLK) coordinates substrate. Residues Asp-183, Glu-211, and Asp-237 each coordinate Mg(2+). Residues Lys-259 and 309–311 (DID) contribute to the substrate site.

The protein belongs to the mandelate racemase/muconate lactonizing enzyme family. The cofactor is Mg(2+).

In terms of biological role, dipeptide epimerase with a broad substrate specificity. Catalyzes the epimerization of L-Ala-L-Ala, L-Ala-L-Ser, L-Ala-L-Thr, L-Ala-L-Met, L-Ala-L-Phe, L-Ala-L-Tyr, L-Gly-L-Asp, L-Val-L-Asp, L-Val-L-Glu and L-Val-L-Phe (in vitro). Can also catalyze the epimerization of L-Ala-L-Glu, but with lower efficiency. In Pedosphaera parvula (strain Ellin514), this protein is L-Ala-D/L-amino acid epimerase.